The chain runs to 207 residues: MKPLTPRQAEVLELIKVNMSETGMPPTRAEIAQKLGFKSANAAEEHLKALAKKGVIEIMPGTSRGIRLLIEEEAVLEETGLPLIGKVAAGEPILAQEHIESHYQVDPALFHPRADFLLRVQGMSMKNIGILDGDLLAVHKTQEVRNGQVVVARLDEDVTVKRFQRKGSQVWLLPENEELEPIAVDLSCQQLTIEGLAVGVIRNADWM.

A DNA-binding region (H-T-H motif) is located at residues 28-48; that stretch reads RAEIAQKLGFKSANAAEEHLK. Active-site for autocatalytic cleavage activity residues include S124 and K161.

Belongs to the peptidase S24 family. In terms of assembly, homodimer.

The enzyme catalyses Hydrolysis of Ala-|-Gly bond in repressor LexA.. In terms of biological role, represses a number of genes involved in the response to DNA damage (SOS response), including recA and lexA. In the presence of single-stranded DNA, RecA interacts with LexA causing an autocatalytic cleavage which disrupts the DNA-binding part of LexA, leading to derepression of the SOS regulon and eventually DNA repair. This is LexA repressor from Aeromonas salmonicida (strain A449).